Consider the following 124-residue polypeptide: Small ribosomal subunit protein bS6 (124 aa).

This sequence belongs to the bacterial ribosomal protein bS6 family.

Functionally, binds together with bS18 to 16S ribosomal RNA. The sequence is that of Small ribosomal subunit protein bS6 from Actinobacillus pleuropneumoniae serotype 7 (strain AP76).